The sequence spans 85 residues: Beta-insect depressant toxin Lqh-dprIT3h (85 aa).

The first 21 residues, 1-21 (MKLLLLLTISASMLIEGLVNA), serve as a signal peptide directing secretion. Residues 22–82 (DGYIRGGDGC…EWDYETDTCG (61 aa)) form the LCN-type CS-alpha/beta domain. Intrachain disulfides connect Cys-31/Cys-81, Cys-35/Cys-56, Cys-42/Cys-63, and Cys-46/Cys-65. A Glycine amide modification is found at Gly-82.

The protein belongs to the long (4 C-C) scorpion toxin superfamily. Sodium channel inhibitor family. Beta subfamily. As to expression, expressed by the venom gland.

It is found in the secreted. Depressant insect beta-toxins cause a transient contraction paralysis followed by a slow flaccid paralysis. They bind voltage-independently at site-4 of sodium channels (Nav) and block action potentials, primarily by depolarizing the axonal membrane and suppressing the sodium current. This depressant toxin is active only on insects. It is found in a relatively small amount in the venom. The chain is Beta-insect depressant toxin Lqh-dprIT3h from Leiurus hebraeus (Hebrew deathstalker scorpion).